Consider the following 256-residue polypeptide: Thiazole synthase (256 aa).

Lys95 serves as the catalytic Schiff-base intermediate with DXP. 1-deoxy-D-xylulose 5-phosphate contacts are provided by residues Gly156, 182–183 (AG), and 204–205 (NT).

The protein belongs to the ThiG family. In terms of assembly, homotetramer. Forms heterodimers with either ThiH or ThiS.

Its subcellular location is the cytoplasm. The enzyme catalyses [ThiS sulfur-carrier protein]-C-terminal-Gly-aminoethanethioate + 2-iminoacetate + 1-deoxy-D-xylulose 5-phosphate = [ThiS sulfur-carrier protein]-C-terminal Gly-Gly + 2-[(2R,5Z)-2-carboxy-4-methylthiazol-5(2H)-ylidene]ethyl phosphate + 2 H2O + H(+). Its pathway is cofactor biosynthesis; thiamine diphosphate biosynthesis. Its function is as follows. Catalyzes the rearrangement of 1-deoxy-D-xylulose 5-phosphate (DXP) to produce the thiazole phosphate moiety of thiamine. Sulfur is provided by the thiocarboxylate moiety of the carrier protein ThiS. In vitro, sulfur can be provided by H(2)S. This is Thiazole synthase from Photobacterium profundum (strain SS9).